The chain runs to 338 residues: Ferredoxin--NADP reductase (338 aa).

Asp35, Gln43, Tyr48, Ala88, Phe122, Asp289, and Thr330 together coordinate FAD.

It belongs to the ferredoxin--NADP reductase type 2 family. As to quaternary structure, homodimer. Requires FAD as cofactor.

The enzyme catalyses 2 reduced [2Fe-2S]-[ferredoxin] + NADP(+) + H(+) = 2 oxidized [2Fe-2S]-[ferredoxin] + NADPH. The sequence is that of Ferredoxin--NADP reductase from Ehrlichia chaffeensis (strain ATCC CRL-10679 / Arkansas).